Here is a 283-residue protein sequence, read N- to C-terminus: Elongation factor Ts (283 aa).

Positions 80–83 (TDFV) are involved in Mg(2+) ion dislocation from EF-Tu.

Belongs to the EF-Ts family.

The protein localises to the cytoplasm. Associates with the EF-Tu.GDP complex and induces the exchange of GDP to GTP. It remains bound to the aminoacyl-tRNA.EF-Tu.GTP complex up to the GTP hydrolysis stage on the ribosome. The protein is Elongation factor Ts of Citrobacter koseri (strain ATCC BAA-895 / CDC 4225-83 / SGSC4696).